Here is a 308-residue protein sequence, read N- to C-terminus: Acyltransferase drtE (308 aa).

The 125-residue stretch at 35–159 (PALVMNPGYN…AAEAKDNFSR (125 aa)) folds into the AB hydrolase-1 domain.

This sequence belongs to the polyketide transferase af380 family.

The protein operates within secondary metabolite biosynthesis; terpenoid biosynthesis. Functionally, acyltransferase; part of the gene cluster that mediates the biosynthesis of various drimane-type sesquiterpene esters, compounds that exhibit diverse biological activities and are widely present in eukaryotes. The pathway begins with the synthesis of the backbone drimenol by the terpene cyclase drtB using farnesyl pyrophosphate (FPP) as substrate. The cytochrome P450 monooxygenase drtD is then responsible for the hydroxylations at C-6, C-9 and C-12, as well as the oxidation of hydroxyl groups at C-6 and C-11 to a ketone and an aldehyde, respectively. Then, the biosynthesis can go in two directions, either the hydroxylated drimenol is further hydroxylated at C-2 and C-3 by an enzyme(s) not associated with the drt cluster, or the FAD-binding oxidoreductase drtC further oxidizes C-11 or C-12 to form the butyrolactone ring. DrtB, drtD and drtC are solely responsible for the formation of the different drimane structures observed during drimane sesquiterpenes biosynthesis. The polyketide synthase drtA synthesizes different lengths (C6 and C8) of PKS chains, which are then oxidized to varying degrees by the short-chain dehydrogenase drtF. Finally, these PKS chains are transferred onto drimane sesquiterpenes by the acyltransferase drtE, forming the sesquiterpene esters. In addition to the different fatty acyl-CoA chains produced by drtA, drtE is also able to use cinnamoyl-CoA as a substrate. The polypeptide is Acyltransferase drtE (Aspergillus calidoustus).